The following is a 580-amino-acid chain: Arginine--tRNA ligase (580 aa).

The short motif at 131–141 (ANPTGPMHVGH) is the 'HIGH' region element.

This sequence belongs to the class-I aminoacyl-tRNA synthetase family. Monomer.

The protein resides in the cytoplasm. It catalyses the reaction tRNA(Arg) + L-arginine + ATP = L-arginyl-tRNA(Arg) + AMP + diphosphate. This chain is Arginine--tRNA ligase, found in Cereibacter sphaeroides (strain ATCC 17025 / ATH 2.4.3) (Rhodobacter sphaeroides).